The chain runs to 174 residues: Alpha-crystallin B chain (174 aa).

Met-1 carries the N-acetylmethionine modification. Residues 55–163 (RMPSWLETGL…PERSIPITRE (109 aa)) enclose the sHSP domain. His-82, His-103, Glu-105, and His-110 together coordinate Zn(2+). Residues 148 to 174 (RKQSDVPERSIPITREEKPAIAGSQRK) form a disordered region. A compositionally biased stretch (basic and acidic residues) spans 149–166 (KQSDVPERSIPITREEKP).

Belongs to the small heat shock protein (HSP20) family. Heteromer composed of three CRYAA and one CRYAB subunits. Aggregates with homologous proteins, including the small heat shock protein HSPB1, to form large heteromeric complexes. Inter-subunit bridging via zinc ions enhances stability, which is crucial as there is no protein turn over in the lens. In terms of tissue distribution, lens as well as other tissues.

Its function is as follows. May contribute to the transparency and refractive index of the lens. This chain is Alpha-crystallin B chain (CRYAB), found in Gallus gallus (Chicken).